A 208-amino-acid polypeptide reads, in one-letter code: Large ribosomal subunit protein uL3 (208 aa).

The interval 116 to 148 (GFQGVIKRHGQSRGPMAHGSRYHRRPGSMGPVA) is disordered.

Belongs to the universal ribosomal protein uL3 family. In terms of assembly, part of the 50S ribosomal subunit. Forms a cluster with proteins L14 and L19.

Its function is as follows. One of the primary rRNA binding proteins, it binds directly near the 3'-end of the 23S rRNA, where it nucleates assembly of the 50S subunit. The chain is Large ribosomal subunit protein uL3 from Streptococcus agalactiae serotype Ia (strain ATCC 27591 / A909 / CDC SS700).